The chain runs to 152 residues: Large ribosomal subunit protein uL15 (152 aa).

Residues methionine 1–serine 13 show a composition bias toward polar residues. The tract at residues methionine 1–leucine 62 is disordered. Over residues threonine 31–lysine 40 the composition is skewed to basic residues.

It belongs to the universal ribosomal protein uL15 family. Part of the 50S ribosomal subunit.

Its function is as follows. Binds to the 23S rRNA. The polypeptide is Large ribosomal subunit protein uL15 (Desulfotalea psychrophila (strain LSv54 / DSM 12343)).